The chain runs to 843 residues: MKAMSLVFLVGLIGEFQVFSSASSPVNCQWDSYAPWSECNGCTKTQTRRRPVAVYGQYGGHPCVGSTFETQSCEPTRGCPTEEGCGERFRCFSGQCISKSLVCNGDSDCEEDSADEDRCEDSESRPSCDLSKPPPNIELTGNGYNALTGQFRNRVLNTKSFGGQCRKVFSGDGRDFYRLSGNVLSYTFQVKVNNDFNYEFYNSTWSYAKHTSTEHTSSSKGRVFIFSSSSSSSSYYAKTYEILKKKSYQLLVVQNTVEVAQFINNNPEFLQLAESFWKELSYLPPLYDYSAYRRLIDQYGTHYLQSGSLGGEYKVLFYVDSEKVAESDLGSEDKKKCASSHISFLFKSSKHKCKAMEEALKSASGTQSNVLRGVPFVRGGRPGFVSGLSYLELDNPDGNKQRYSSWAGSVTDLPQVIKQKLTPLYELVKEVPCASVKRLYLKRALEEYLDEFDSCHCQPCQNGGMASVEGTQCQCHCKPNTFGVACEQGVLVGDHAGGIDGGWSCWSSWGPCAQGKKTRSRKCNNPPPSGGGKSCIGETSESRQCEDEDLEHLRLLEPHCFPLSLVPTEFCPSPPALKDGFVQNEETTFPVGKNIVYSCNEGYSLVGDPVARCGEDLQWTVGKMHCQKIACVLPTLMRGLQSHPQKPFYTVGEKVTFSCSSGMSLEGPSTFLCGSSLKWSPEMKNVQCVRKEAPLAKKVPECQLWEKLQNSKCVCKMPYECGSSLDVCARDERSKRILRLTVCKMHVLQCQGRNYTLSVGETCTLPGSAEKACGACPLWEKCDAQSSKCVCRAASECEEAGFRVCVEVNGREQTMTECEAGVLRCLGLSITVTSIRPCAPEAP.

Residues 1–22 (MKAMSLVFLVGLIGEFQVFSSA) form the signal peptide. The TSP type-1 1 domain maps to 27 to 80 (NCQWDSYAPWSECNGCTKTQTRRRPVAVYGQYGGHPCVGSTFETQSCEPTRGCP). 7 disulfides stabilise this stretch: C28-C63, C39-C73, C42-C79, C85-C96, C91-C109, C103-C119, and C128-C165. A glycan (C-linked (Man) tryptophan) is linked at W36. The LDL-receptor class A domain maps to 83–121 (EGCGERFRCFSGQCISKSLVCNGDSDCEEDSADEDRCED). A disordered region spans residues 105–142 (GDSDCEEDSADEDRCEDSESRPSCDLSKPPPNIELTGN). A compositionally biased stretch (acidic residues) spans 107–120 (SDCEEDSADEDRCE). An MACPF domain is found at 124 to 456 (SRPSCDLSKP…EYLDEFDSCH (333 aa)). The N-linked (GlcNAc...) asparagine glycan is linked to N202. 21 disulfide bridges follow: C337–C353, C433–C560, C455–C505, C457–C473, C460–C475, C477–C486, C512–C545, C523–C535, C571–C613, C599–C626, C631–C673, C659–C688, C702–C713, C715–C750, C721–C743, C728–C763, C773–C782, C776–C789, C791–C825, C797–C818, and C805–C838. The EGF-like domain occupies 457-487 (CQPCQNGGMASVEGTQCQCHCKPNTFGVACE). A TSP type-1 2 domain is found at 500–549 (DGGWSCWSSWGPCAQGKKTRSRKCNNPPPSGGGKSCIGETSESRQCEDED). C-linked (Man) tryptophan glycans are attached at residues W503, W506, and W509. Positions 516–539 (KKTRSRKCNNPPPSGGGKSCIGET) are disordered. CCP regions lie at residues 545–615 (CEDE…RCGE) and 616–693 (DLQW…RKEA). 2 Sushi domains span residues 569–628 (EFCP…HCQK) and 629–690 (IACV…QCVR). 2 factor I module (FIM) regions span residues 695 to 770 (LAKK…GSAE) and 771 to 843 (KACG…PEAP). Residue N754 is glycosylated (N-linked (GlcNAc...) asparagine).

This sequence belongs to the complement C6/C7/C8/C9 family. Monomer or dimer; as a C5b-7 complex it can also form multimeric rosettes. Component of the membrane attack complex (MAC), composed of complement C5b, C6, C7, C8A, C8B, C8G and multiple copies of the pore-forming subunit C9. Post-translationally, C-, N- and O-glycosylated. O-glycosylated with core 1 or possibly core 8 glycans. As to expression, detected in plasma (at protein level). Bone marrow, heart, intestine, lung, spleen, kidney, liver and thymus.

The protein resides in the secreted. It localises to the target cell membrane. With respect to regulation, membrane attack complex (MAC) assembly is inhibited by CD59, thereby protecting self-cells from damage during complement activation. MAC assembly is also inhibited by clusterin (CLU) chaperones that inhibit polymerization of C9. Component of the membrane attack complex (MAC), a multiprotein complex activated by the complement cascade, which inserts into a target cell membrane and forms a pore, leading to target cell membrane rupture and cell lysis. The MAC is initiated by proteolytic cleavage of C5 into complement C5b in response to the classical, alternative, lectin and GZMK complement pathways. The complement pathways consist in a cascade of proteins that leads to phagocytosis and breakdown of pathogens and signaling that strengthens the adaptive immune system. C7 serves as a membrane anchor. During MAC assembly, associates with C5b and C6 to form the C5b-7 complex, a key lipophilic precursor of the MAC complex, which associates with the outer leaflet and reduces the energy for membrane bending. This Sus scrofa (Pig) protein is Complement component C7 (C7).